An 873-amino-acid chain; its full sequence is Calmodulin-dependent glutamylase SidJ (873 aa).

Residues 16–90 (QSEDNPSETA…TTSTTKQKGP (75 aa)) are disordered. The span at 22–58 (SETAVETTDVSTKIKTTDTTQEESSVKTKTVVPTQPG) shows a compositional bias: polar residues. Residues aspartate 542 and aspartate 545 each coordinate Mg(2+). Residues 851–873 (NLSEKSDIDSEKPESERTTDKRL) are disordered.

As to quaternary structure, interacts with host calmodulin/CALM1; this interaction is required for glutamylase activity. Requires Mg(2+) as cofactor.

The enzyme catalyses L-glutamyl-[protein] + L-glutamate + ATP = gamma-L-glutamyl-L-glutamyl-[protein] + ADP + phosphate + H(+). It carries out the reaction (L-glutamyl)(n)-gamma-L-glutamyl-L-glutamyl-[protein] + L-glutamate + ATP = (L-glutamyl)(n+1)-gamma-L-glutamyl-L-glutamyl-[protein] + ADP + phosphate + H(+). Glytamylation catalyzed by SidJ requires host calmodulin and can be regulated by intracellular changes in Ca2+ concentrations. Also requires ATP. Functionally, glutamylase that mediates the covalent attachment of glutamate moieties to SdeA on one of the catalytic residues that is required for its mono-ADP-ribosyltransferase activity. In turn, inhibits SdeA ubiquitinating activity. Also glutamylates related SdeB, SdeC and SidE. Glutamylase activity only occurs in the host since it requires host calmodulin. May also reverse the SdeA-mediated substrate ubiquitination by cleaving the phosphodiester bond that links phosphoribosylated ubiquitin to protein substrates via its deubiquitinase activity. This is Calmodulin-dependent glutamylase SidJ from Legionella pneumophila subsp. pneumophila (strain Philadelphia 1 / ATCC 33152 / DSM 7513).